Reading from the N-terminus, the 235-residue chain is Myelin protein zero-like protein 3 (235 aa).

A signal peptide spans methionine 1–serine 31. The 117-residue stretch at leucine 32–threonine 148 folds into the Ig-like V-type domain. Topologically, residues leucine 32–serine 158 are extracellular. A disulfide bond links cysteine 52 and cysteine 128. N-linked (GlcNAc...) asparagine glycosylation occurs at asparagine 123. Residues valine 159–valine 179 traverse the membrane as a helical segment. Residues arginine 180–tyrosine 235 are Cytoplasmic-facing.

The protein belongs to the myelin P0 protein family.

It is found in the membrane. In terms of biological role, mediates homophilic cell-cell adhesion. The polypeptide is Myelin protein zero-like protein 3 (MPZL3) (Homo sapiens (Human)).